We begin with the raw amino-acid sequence, 191 residues long: MIGSITGNVEEIRDSYIILNVGNIGYIIYVSHKVLQTCKVGDNIKLYIETYVNRDNITQLYGFLNRQEQDYFKMLVTINGINYKTALSILSKLSPEQIFSAVVNNDKIAFKGNGIGEKLAGRIITELQYKINKMPIEETFSIIENDDSLAALISLGYEKLKAFNVIQEIKSKTPDASTQEVIRKALQKLSQ.

The tract at residues 1 to 64 is domain I; it reads MIGSITGNVE…DNITQLYGFL (64 aa). The interval 65–142 is domain II; sequence NRQEQDYFKM…KMPIEETFSI (78 aa). Residues 143-146 are flexible linker; that stretch reads IEND. The interval 146–191 is domain III; sequence DDSLAALISLGYEKLKAFNVIQEIKSKTPDASTQEVIRKALQKLSQ.

Belongs to the RuvA family. As to quaternary structure, homotetramer. Forms an RuvA(8)-RuvB(12)-Holliday junction (HJ) complex. HJ DNA is sandwiched between 2 RuvA tetramers; dsDNA enters through RuvA and exits via RuvB. An RuvB hexamer assembles on each DNA strand where it exits the tetramer. Each RuvB hexamer is contacted by two RuvA subunits (via domain III) on 2 adjacent RuvB subunits; this complex drives branch migration. In the full resolvosome a probable DNA-RuvA(4)-RuvB(12)-RuvC(2) complex forms which resolves the HJ.

It localises to the cytoplasm. Its function is as follows. The RuvA-RuvB-RuvC complex processes Holliday junction (HJ) DNA during genetic recombination and DNA repair, while the RuvA-RuvB complex plays an important role in the rescue of blocked DNA replication forks via replication fork reversal (RFR). RuvA specifically binds to HJ cruciform DNA, conferring on it an open structure. The RuvB hexamer acts as an ATP-dependent pump, pulling dsDNA into and through the RuvAB complex. HJ branch migration allows RuvC to scan DNA until it finds its consensus sequence, where it cleaves and resolves the cruciform DNA. In Ehrlichia ruminantium (strain Gardel), this protein is Holliday junction branch migration complex subunit RuvA.